Reading from the N-terminus, the 606-residue chain is Cryptochrome-1 (606 aa).

One can recognise a Photolyase/cryptochrome alpha/beta domain in the interval 3-132; it reads VNAVHWFRKG…EVIVRISHTL (130 aa). A Glycyl lysine isopeptide (Lys-Gly) (interchain with G-Cter in ubiquitin) cross-link involves residue Lys-11. The LIR 1 motif lies at 50-54; sequence NRWRF. The residue at position 71 (Ser-71) is a Phosphoserine; by AMPK. The LIR 2 signature appears at 82 to 87; it reads DVFPRL. A Glycyl lysine isopeptide (Lys-Gly) (interchain with G-Cter in ubiquitin) cross-link involves residue Lys-107. The LIR 3 motif lies at 151–156; sequence KRFQTL. Lys-159 is covalently cross-linked (Glycyl lysine isopeptide (Lys-Gly) (interchain with G-Cter in ubiquitin)). Residue Ser-247 is modified to Phosphoserine; by MAPK. Ser-252 is a binding site for FAD. 2 short sequence motifs (LIR) span residues 255–260 and 271–276; these read LRFGCL and DLYKKV. Position 280 is a phosphoserine; by AMPK (Ser-280). Residues 285-290 carry the LIR 6 motif; sequence SLYGQL. Gln-289 lines the FAD pocket. Residue Lys-329 forms a Glycyl lysine isopeptide (Lys-Gly) (interchain with G-Cter in ubiquitin) linkage. The LIR 7 motif lies at 335–339; it reads TGFPW. Position 355 (His-355) interacts with FAD. A required for inhibition of CLOCK-BMAL1-mediated transcription region spans residues 371 to 470; it reads WISWEEGMKV…LIGVNYPKPM (100 aa). The LIR 8 signature appears at 379-384; the sequence is KVFEEL. 387–389 is a binding site for FAD; the sequence is DAD. Short sequence motifs (LIR) lie at residues 395–400, 411–416, and 430–435; these read GSWMWL, HCYCPV, and RRYLPV. Residues 471-493 are interaction with TIMELESS; it reads VNHAEASRLNIERMKQIYQQLSR. Lys-485 participates in a covalent cross-link: Glycyl lysine isopeptide (Lys-Gly) (interchain with G-Cter in ubiquitin). 2 short sequence motifs (LIR) span residues 486–491 and 492–497; these read QIYQQL and SRYRGL. Residues 559-606 form a disordered region; sequence YAHGDSQQTHSLKQGRSSAGTGLSSGKRPSQEEDAQSVGPKVQRQSSN. Positions 563–586 are enriched in polar residues; it reads DSQQTHSLKQGRSSAGTGLSSGKR. Residue Lys-585 forms a Glycyl lysine isopeptide (Lys-Gly) (interchain with G-Cter in ubiquitin) linkage. Phosphoserine is present on Ser-588.

It belongs to the DNA photolyase class-1 family. In terms of assembly, component of the circadian core oscillator, which includes the CRY proteins, CLOCK or NPAS2, BMAL1 or BMAL2, CSNK1D and/or CSNK1E, TIMELESS, and the PER proteins. Interacts directly with TIMELESS. Interacts directly with PER1 and PER2; interaction with PER2 inhibits its ubiquitination and vice versa. Interacts with PER3. Interacts with FBXL21. Interacts with FBXL3. Interacts with PPP5C (via TPR repeats). Interacts with CLOCK-BMAL1 independently of PER2 and DNA. Interacts with HDAC1, HDAC2 and SIN3B. Interacts with nuclear receptors AR, NR1D1, NR3C1/GR, RORA and RORC; the interaction with at least NR3C1/GR is ligand dependent. Interacts with PRKDC. Interacts with the G protein subunit alpha GNAS; the interaction may block GPCR-mediated regulation of cAMP concentrations. Interacts with PRMT5. Interacts with EZH2. Interacts with MYBBP1A, DOCK7, HNRNPU, RPL7A, RPL8 and RPS3. Interacts with MAP1LC3B. Interacts with CLOCK. Interacts with BMAL1. Interacts weakly with HDAC3; this interaction is enhanced in the presence of FBXL3. Interacts with TRIM28, KCTD5 and DDB1. Interacts with DTL. Interacts with DDB1-CUL4A complex. Interacts with FOXO1. Interacts with PSMD2 in a KDM8-dependent manner. Interacts with KDM8 in a FBXL3-dependent manner. Interacts with PPARA. Interacts with PPARG in a ligand-dependent manner. Interacts with PPARD (via domain NR LBD) in a ligand-dependent manner. Interacts with NR1I2 (via domain NR LBD) in a ligand-dependent manner. Interacts with NR1I3, VDR and HNF4A. It depends on FAD as a cofactor. Requires (6R)-5,10-methylene-5,6,7,8-tetrahydrofolate as cofactor. Phosphorylation on Ser-247 by MAPK is important for the inhibition of CLOCK-BMAL1-mediated transcriptional activity. Phosphorylation by CSNK1E requires interaction with PER1 or PER2. Phosphorylation at Ser-71 and Ser-280 by AMPK decreases protein stability. Phosphorylation at Ser-588 exhibits a robust circadian rhythm with a peak at CT8, increases protein stability, prevents SCF(FBXL3)-mediated degradation and is antagonized by interaction with PRKDC. Post-translationally, ubiquitinated by the SCF(FBXL3) and SCF(FBXL21) complexes, regulating the balance between degradation and stabilization. The SCF(FBXL3) complex is mainly nuclear and mediates ubiquitination and subsequent degradation of CRY1. In contrast, cytoplasmic SCF(FBXL21) complex-mediated ubiquitination leads to stabilize CRY1 and counteract the activity of the SCF(FBXL3) complex. The SCF(FBXL3) and SCF(FBXL21) complexes probably mediate ubiquitination at different Lys residues. Ubiquitination at Lys-11 and Lys-107 are specifically ubiquitinated by the SCF(FBXL21) complex but not by the SCF(FBXL3) complex. Ubiquitination may be inhibited by PER2. Deubiquitinated by USP7. In terms of processing, undergoes autophagy-mediated degradation in the liver in a time-dependent manner. Autophagic degradation of CRY1 (an inhibitor of gluconeogenesis) occurs during periods of reduced feeding allowing induction of gluconeogenesis and maintenance of blood glucose levels. As to expression, expressed in cones, amacrine cells, and retinal ganglion cells of the retina (at protein level). Expressed in all tissues examined including heart, brain, spleen, lung, liver, skeletal muscle, kidney and testis. Higher levels in brain, liver and testis. In the retina, highly expressed in the ganglion cell layer (GCL) and in the inner nuclear layer (INL). Evenly distributed in central and peripheral retina. In the brain, highly expressed in the suprachiasmatic nucleus (SCN). High levels in cerebral cortical layers particularly in the pyramidial cell layer of the hippocampus, the granular cell layer of the dentate gyrus (DG) and the pyramidal cell layer of the piriform cortex (PFC).

Its subcellular location is the cytoplasm. The protein resides in the nucleus. With respect to regulation, KL001 (N-[3-(9H-carbazol-9-yl)-2-hydroxypropyl]-N-(2-furanylmethyl)-methanesulfonamide) binds to CRY1 and stabilizes it by inhibiting FBXL3- and ubiquitin-dependent degradation of CRY1 resulting in lengthening of the circadian periods. KL001-mediated CRY1 stabilization can inhibit glucagon-induced gluconeogenesis in primary hepatocytes. Functionally, transcriptional repressor which forms a core component of the circadian clock. The circadian clock, an internal time-keeping system, regulates various physiological processes through the generation of approximately 24 hour circadian rhythms in gene expression, which are translated into rhythms in metabolism and behavior. It is derived from the Latin roots 'circa' (about) and 'diem' (day) and acts as an important regulator of a wide array of physiological functions including metabolism, sleep, body temperature, blood pressure, endocrine, immune, cardiovascular, and renal function. Consists of two major components: the central clock, residing in the suprachiasmatic nucleus (SCN) of the brain, and the peripheral clocks that are present in nearly every tissue and organ system. Both the central and peripheral clocks can be reset by environmental cues, also known as Zeitgebers (German for 'timegivers'). The predominant Zeitgeber for the central clock is light, which is sensed by retina and signals directly to the SCN. The central clock entrains the peripheral clocks through neuronal and hormonal signals, body temperature and feeding-related cues, aligning all clocks with the external light/dark cycle. Circadian rhythms allow an organism to achieve temporal homeostasis with its environment at the molecular level by regulating gene expression to create a peak of protein expression once every 24 hours to control when a particular physiological process is most active with respect to the solar day. Transcription and translation of core clock components (CLOCK, NPAS2, BMAL1, BMAL2, PER1, PER2, PER3, CRY1 and CRY2) plays a critical role in rhythm generation, whereas delays imposed by post-translational modifications (PTMs) are important for determining the period (tau) of the rhythms (tau refers to the period of a rhythm and is the length, in time, of one complete cycle). A diurnal rhythm is synchronized with the day/night cycle, while the ultradian and infradian rhythms have a period shorter and longer than 24 hours, respectively. Disruptions in the circadian rhythms contribute to the pathology of cardiovascular diseases, cancer, metabolic syndromes and aging. A transcription/translation feedback loop (TTFL) forms the core of the molecular circadian clock mechanism. Transcription factors, CLOCK or NPAS2 and BMAL1 or BMAL2, form the positive limb of the feedback loop, act in the form of a heterodimer and activate the transcription of core clock genes and clock-controlled genes (involved in key metabolic processes), harboring E-box elements (5'-CACGTG-3') within their promoters. The core clock genes: PER1/2/3 and CRY1/2 which are transcriptional repressors form the negative limb of the feedback loop and interact with the CLOCK|NPAS2-BMAL1|BMAL2 heterodimer inhibiting its activity and thereby negatively regulating their own expression. This heterodimer also activates nuclear receptors NR1D1/2 and RORA/B/G, which form a second feedback loop and which activate and repress BMAL1 transcription, respectively. CRY1 and CRY2 have redundant functions but also differential and selective contributions at least in defining the pace of the SCN circadian clock and its circadian transcriptional outputs. More potent transcriptional repressor in cerebellum and liver than CRY2, though more effective in lengthening the period of the SCN oscillator. On its side, CRY2 seems to play a critical role in tuning SCN circadian period by opposing the action of CRY1. With CRY2, is dispensable for circadian rhythm generation but necessary for the development of intercellular networks for rhythm synchrony. Capable of translocating circadian clock core proteins such as PER proteins to the nucleus. Interacts with CLOCK-BMAL1 independently of PER proteins and is found at CLOCK-BMAL1-bound sites, suggesting that CRY may act as a molecular gatekeeper to maintain CLOCK-BMAL1 in a poised and repressed state until the proper time for transcriptional activation. Represses the CLOCK-BMAL1 induced transcription of BHLHE40/DEC1, ATF4, MTA1, KLF10 and NAMPT. May repress circadian target genes expression in collaboration with HDAC1 and HDAC2 through histone deacetylation. Mediates the clock-control activation of ATR and modulates ATR-mediated DNA damage checkpoint. In liver, mediates circadian regulation of cAMP signaling and gluconeogenesis by binding to membrane-coupled G proteins and blocking glucagon-mediated increases in intracellular cAMP concentrations and CREB1 phosphorylation. Inhibits hepatic gluconeogenesis by decreasing nuclear FOXO1 levels that down-regulates gluconeogenic gene expression. Besides its role in the maintenance of the circadian clock, is also involved in the regulation of other processes. Represses glucocorticoid receptor NR3C1/GR-induced transcriptional activity by binding to glucocorticoid response elements (GREs). Plays a key role in glucose and lipid metabolism modulation, in part, through the transcriptional regulation of genes involved in these pathways, such as LEP or ACSL4. Represses PPARD and its target genes in the skeletal muscle and limits exercise capacity. Plays an essential role in the generation of circadian rhythms in the retina. Represses the transcriptional activity of NR1I2. In Mus musculus (Mouse), this protein is Cryptochrome-1 (Cry1).